A 400-amino-acid chain; its full sequence is Enoyl-[acyl-carrier-protein] reductase [NADH] 2 (400 aa).

NAD(+)-binding positions include Gly-48–Phe-53, Phe-75–Glu-76, Asp-112–Ala-113, and Leu-141–Ala-142. Tyr-227 contacts substrate. Tyr-237 acts as the Proton donor in catalysis. Residues Lys-246 and Leu-275–Thr-277 contribute to the NAD(+) site.

Belongs to the TER reductase family. Monomer.

The enzyme catalyses a 2,3-saturated acyl-[ACP] + NAD(+) = a (2E)-enoyl-[ACP] + NADH + H(+). The protein operates within lipid metabolism; fatty acid biosynthesis. In terms of biological role, involved in the final reduction of the elongation cycle of fatty acid synthesis (FAS II). Catalyzes the reduction of a carbon-carbon double bond in an enoyl moiety that is covalently linked to an acyl carrier protein (ACP). The protein is Enoyl-[acyl-carrier-protein] reductase [NADH] 2 of Photobacterium profundum (strain SS9).